The chain runs to 227 residues: Small ribosomal subunit protein uS3 (227 aa).

Positions V39–R107 constitute a KH type-2 domain.

This sequence belongs to the universal ribosomal protein uS3 family. In terms of assembly, part of the 30S ribosomal subunit. Forms a tight complex with proteins S10 and S14.

Binds the lower part of the 30S subunit head. Binds mRNA in the 70S ribosome, positioning it for translation. This is Small ribosomal subunit protein uS3 from Coxiella burnetii (strain CbuK_Q154) (Coxiella burnetii (strain Q154)).